Reading from the N-terminus, the 354-residue chain is 4-hydroxy-2-oxovalerate aldolase 6 (354 aa).

Residues 10–262 (VRIVDTTLRD…ATGLDVMATL (253 aa)) enclose the Pyruvate carboxyltransferase domain. Residue 18-19 (RD) coordinates substrate. A Mn(2+)-binding site is contributed by D19. Catalysis depends on H22, which acts as the Proton acceptor. Residues S172 and H201 each coordinate substrate. H201 and H203 together coordinate Mn(2+). Substrate is bound at residue Y292.

Belongs to the 4-hydroxy-2-oxovalerate aldolase family.

It catalyses the reaction (S)-4-hydroxy-2-oxopentanoate = acetaldehyde + pyruvate. The sequence is that of 4-hydroxy-2-oxovalerate aldolase 6 from Rhodococcus jostii (strain RHA1).